Reading from the N-terminus, the 1408-residue chain is ABC transporter B family member 20 (1408 aa).

A disordered region spans residues 14–49 (HMQPLTPVSEVSEPPESPSPYLDPGAESGGGTGTAA). The span at 20 to 39 (PVSEVSEPPESPSPYLDPGA) shows a compositional bias: low complexity. Residues 86-106 (VLMIVGSVAAAAHGTALIVYL) traverse the membrane as a helical segment. One can recognise an ABC transmembrane type-1 1 domain in the interval 88–381 (MIVGSVAAAA…AATNFYSFDQ (294 aa)). N120 carries an N-linked (GlcNAc...) asparagine glycan. The next 3 helical transmembrane spans lie at 141–161 (IVYI…CWIL), 214–233 (VGNY…IGFV), and 238–260 (IALI…NIFL). N-linked (GlcNAc...) asparagine glycosylation occurs at N293. 2 helical membrane passes run 312 to 332 (GILI…LAIC) and 353 to 373 (GEII…NQAA). The 236-residue stretch at 414–649 (IEFRNVYFSY…GGLYAELLKC (236 aa)) folds into the ABC transporter 1 domain. 449 to 456 (GRNGSGKS) lines the ATP pocket. N451 is a glycosylation site (N-linked (GlcNAc...) asparagine). Disordered stretches follow at residues 676–735 (SSAG…SLDC) and 752–816 (LPHL…DAQH). The span at 762–771 (CPQQKSNGSE) shows a compositional bias: polar residues. The N-linked (GlcNAc...) asparagine glycan is linked to N768. Positions 802 to 816 (DDTKANGKASKDAQH) are enriched in basic and acidic residues. Positions 836-1124 (AVLGSLGAAI…PFGLAPYILK (289 aa)) constitute an ABC transmembrane type-1 2 domain. Transmembrane regions (helical) follow at residues 841-861 (LGAA…ALVV), 881-901 (LIIA…HFYF), 959-979 (IFIQ…LLGW), 983-1003 (LVAL…KLWL), 1062-1082 (IGFA…LLLW), and 1103-1123 (MVFS…PYIL). An ABC transporter 2 domain is found at 1159 to 1396 (IELKNVDFCY…NGLYVRLMQP (238 aa)). An N-linked (GlcNAc...) asparagine glycan is attached at N1179. 1194-1201 (GVSGSGKS) lines the ATP pocket. N-linked (GlcNAc...) asparagine glycosylation is found at N1261 and N1347.

This sequence belongs to the ABC transporter superfamily. ABCB family. Multidrug resistance exporter (TC 3.A.1.201) subfamily. In terms of tissue distribution, expressed in aerial tissues.

The protein resides in the membrane. The catalysed reaction is (indol-3-yl)acetate(in) + ATP + H2O = (indol-3-yl)acetate(out) + ADP + phosphate + H(+). In terms of biological role, probable auxin efflux transporter that contributes, together with ABCB6 and in a FKBP42/TWD1-dependent manner, to the regulation of leaf position and morphology, internode distribution, roots development, and inflorescence organization, probably by modulating auxin repartition. In Arabidopsis thaliana (Mouse-ear cress), this protein is ABC transporter B family member 20.